Here is a 120-residue protein sequence, read N- to C-terminus: Small ribosomal subunit protein uS13 (120 aa).

The segment at 93–120 (RRGLPCRGQKTKTNARTRKGKRKTVGAA) is disordered.

The protein belongs to the universal ribosomal protein uS13 family. In terms of assembly, part of the 30S ribosomal subunit. Forms a loose heterodimer with protein S19. Forms two bridges to the 50S subunit in the 70S ribosome.

In terms of biological role, located at the top of the head of the 30S subunit, it contacts several helices of the 16S rRNA. In the 70S ribosome it contacts the 23S rRNA (bridge B1a) and protein L5 of the 50S subunit (bridge B1b), connecting the 2 subunits; these bridges are implicated in subunit movement. Contacts the tRNAs in the A and P-sites. This chain is Small ribosomal subunit protein uS13, found in Sulfurovum sp. (strain NBC37-1).